Reading from the N-terminus, the 549-residue chain is Probable amidase (549 aa).

Catalysis depends on charge relay system residues lysine 132 and serine 209. Serine 233 acts as the Acyl-ester intermediate in catalysis.

This sequence belongs to the amidase family.

It catalyses the reaction a monocarboxylic acid amide + H2O = a monocarboxylate + NH4(+). This is Probable amidase (AMD2) from Saccharomyces cerevisiae (strain ATCC 204508 / S288c) (Baker's yeast).